Reading from the N-terminus, the 498-residue chain is Angiopoietin-1 (498 aa).

Residues 1 to 15 form the signal peptide; sequence MTVFLSFAFLAAILT. Positions 81–119 form a coiled coil; it reads QKLQHLEHVMENYTQWLQKLENYIVENMKSEMAQIQQNA. 5 N-linked (GlcNAc...) asparagine glycosylation sites follow: asparagine 92, asparagine 122, asparagine 154, asparagine 243, and asparagine 295. A coiled-coil region spans residues 153–261; that stretch reads LNQTSRLEIQ…LELMDTVHNL (109 aa). The Fibrinogen C-terminal domain occupies 277-497; sequence REEEKPFRDC…STTMMIRPLD (221 aa). 2 disulfides stabilise this stretch: cysteine 286–cysteine 315 and cysteine 439–cysteine 452.

As to quaternary structure, homooligomer. Interacts with TEK/TIE2. Interacts with SVEP1/polydom. Interacts with THBD; this interaction significantly inhibits the generation of activated PC and TAFIa/CPB2 by the thrombin/thrombomodulin complex. Post-translationally, glycosylated.

The protein resides in the secreted. In terms of biological role, binds and activates TEK/TIE2 receptor by inducing its dimerization and tyrosine phosphorylation. Plays an important role in the regulation of angiogenesis, endothelial cell survival, proliferation, migration, adhesion and cell spreading, reorganization of the actin cytoskeleton, but also maintenance of vascular quiescence. Required for normal angiogenesis and heart development during embryogenesis. After birth, activates or inhibits angiogenesis, depending on the context. Inhibits angiogenesis and promotes vascular stability in quiescent vessels, where endothelial cells have tight contacts. In quiescent vessels, ANGPT1 oligomers recruit TEK to cell-cell contacts, forming complexes with TEK molecules from adjoining cells, and this leads to preferential activation of phosphatidylinositol 3-kinase and the AKT1 signaling cascades. In migrating endothelial cells that lack cell-cell adhesions, ANGT1 recruits TEK to contacts with the extracellular matrix, leading to the formation of focal adhesion complexes, activation of PTK2/FAK and of the downstream kinases MAPK1/ERK2 and MAPK3/ERK1, and ultimately to the stimulation of sprouting angiogenesis. Mediates blood vessel maturation/stability. Implicated in endothelial developmental processes later and distinct from that of VEGF. Appears to play a crucial role in mediating reciprocal interactions between the endothelium and surrounding matrix and mesenchyme. This is Angiopoietin-1 (ANGPT1) from Homo sapiens (Human).